We begin with the raw amino-acid sequence, 453 residues long: Bifunctional protein GlmU (453 aa).

The pyrophosphorylase stretch occupies residues 1–226 (MKFSAVILAA…PIEVEGVNDR (226 aa)). Residues 8 to 11 (LAAG), Lys-22, Gln-73, 78 to 79 (GT), 100 to 102 (YGD), Gly-137, Glu-151, Asn-166, and Asn-224 contribute to the UDP-N-acetyl-alpha-D-glucosamine site. Asp-102 serves as a coordination point for Mg(2+). Asn-224 is a binding site for Mg(2+). Residues 227-247 (AQLARLERAFQAAQAKKLLEQ) form a linker region. Residues 248–453 (GVMLRDPARF…TGWQRPVKKK (206 aa)) are N-acetyltransferase. Arg-330 and Lys-348 together coordinate UDP-N-acetyl-alpha-D-glucosamine. His-360 (proton acceptor) is an active-site residue. UDP-N-acetyl-alpha-D-glucosamine contacts are provided by Tyr-363 and Asn-374. Residues Ala-377, 383–384 (NY), Ser-402, Ala-420, and Arg-437 each bind acetyl-CoA.

This sequence in the N-terminal section; belongs to the N-acetylglucosamine-1-phosphate uridyltransferase family. In the C-terminal section; belongs to the transferase hexapeptide repeat family. Homotrimer. It depends on Mg(2+) as a cofactor.

It localises to the cytoplasm. The enzyme catalyses alpha-D-glucosamine 1-phosphate + acetyl-CoA = N-acetyl-alpha-D-glucosamine 1-phosphate + CoA + H(+). The catalysed reaction is N-acetyl-alpha-D-glucosamine 1-phosphate + UTP + H(+) = UDP-N-acetyl-alpha-D-glucosamine + diphosphate. Its pathway is nucleotide-sugar biosynthesis; UDP-N-acetyl-alpha-D-glucosamine biosynthesis; N-acetyl-alpha-D-glucosamine 1-phosphate from alpha-D-glucosamine 6-phosphate (route II): step 2/2. The protein operates within nucleotide-sugar biosynthesis; UDP-N-acetyl-alpha-D-glucosamine biosynthesis; UDP-N-acetyl-alpha-D-glucosamine from N-acetyl-alpha-D-glucosamine 1-phosphate: step 1/1. It functions in the pathway bacterial outer membrane biogenesis; LPS lipid A biosynthesis. Catalyzes the last two sequential reactions in the de novo biosynthetic pathway for UDP-N-acetylglucosamine (UDP-GlcNAc). The C-terminal domain catalyzes the transfer of acetyl group from acetyl coenzyme A to glucosamine-1-phosphate (GlcN-1-P) to produce N-acetylglucosamine-1-phosphate (GlcNAc-1-P), which is converted into UDP-GlcNAc by the transfer of uridine 5-monophosphate (from uridine 5-triphosphate), a reaction catalyzed by the N-terminal domain. The sequence is that of Bifunctional protein GlmU from Vibrio vulnificus (strain CMCP6).